We begin with the raw amino-acid sequence, 290 residues long: MKYRKFIILVLSILIILPVSTLDGHHIANADDDSPKKLKYKENSALALNYHRVRKANFLNNFIYFFSSSKEIKNYSVSQSQFESQIKWLKSHDAKFLTLKEFLYYKKKGKFPKRSVWINFDDMDETIYENAYPILKKYKIPATGFIITGHVGEENFHNLDMISKKELKEMYKTGLWEFETHTHDLHNLSKNNKSKLMKASEATIIKDLNKSEKYLTKNFKKSQKTIAYPYGLMNDDKLPVIKKAGLKYGFSLEEKAVTPNSNDYYIPRILISDDAFEHLIKRWDGFHEKD.

An N-terminal signal peptide occupies residues 1 to 28 (MKYRKFIILVLSILIILPVSTLDGHHIA). The NodB homology domain occupies 114–290 (RSVWINFDDM…KRWDGFHEKD (177 aa)).

It belongs to the polysaccharide deacetylase family.

Its subcellular location is the secreted. It is found in the cell wall. In terms of biological role, catalyzes the N-deacetylation of poly-beta-1,6-N-acetyl-D-glucosamine (PNAG, also referred to as PIA), a biofilm adhesin polysaccharide. N-deacetylation is crucial for attachment of the polysaccharide to the bacterial cell surface; it leads to the introduction of positive charges in the otherwise neutral PIA polymer, allowing electrostatic interactions. In Staphylococcus aureus (strain NCTC 8325 / PS 47), this protein is Poly-beta-1,6-N-acetyl-D-glucosamine N-deacetylase (icaB).